The sequence spans 1048 residues: Malignant fibrous histiocytoma-amplified sequence 1 homolog (1048 aa).

An N-acetylalanine modification is found at Ala-2. LRR repeat units follow at residues 60–81 (DIEV…LGSA), 84–105 (SLRV…VAEL), 108–129 (HLTE…VVSA), 132–153 (ELRK…LGAL), 155–176 (HLEE…FSCL), 178–199 (HLRT…LLQL), 201–222 (ALEE…ISAL), 224–246 (ALKI…CELA), 247–268 (SLES…FSRL), 270–292 (RLKM…LPLA), 293–314 (GLEE…IAGL), 316–337 (RLLT…IVEL), and 339–360 (GLEE…FGQL). The interval 60–360 (DIEVLNLGNN…AVLPDNFGQL (301 aa)) is required for interaction with PJA2. Residues 60-645 (DIEVLNLGNN…DKLLSVAEHR (586 aa)) form a required for interaction with PPP2R2A region. The Roc domain occupies 399–645 (QPAVQPRLKL…DKLLSVAEHR (247 aa)). Lys-597 carries the post-translational modification N6-acetyllysine.

As to quaternary structure, interacts with RAF1. Interacts with HSPD1. Interacts with PPP2CA; retains PPP2CA into the cytoplasm and excludes it from the nucleus. Interacts with PPP2R2A; the interaction is direct. Interacts with PJA2. Post-translationally, ubiquitinated. Ubiquitination by PJA2 does not lead MFHAS1 to proteasomal degradation but positively regulates its function in polarization of macrophages.

It is found in the cytoplasm. Its function is as follows. Probable GTP-binding protein. Functions in innate immunity and more specifically the inflammatory response as a regulator of the Toll-like receptor TLR2 and TLR4 signaling pathways. Negatively regulates the part of the TLR4 signaling pathway that leads to the activation of the transcription factor AP-1. By retaining the phosphatase complex PP2A into the cytoplasm, prevents the dephosphorylation of the AP-1 subunit JUN which is required for proper activation of the transcription factor. Both inhibits and activates the TLR2-dependent signaling pathway. Positively regulates the TLR2 signaling pathway to activate specifically the downstream p38 and JNK MAP kinases and promote the polarization of macrophages toward the pro-inflammatory M1 phenotype. It may also play a role in the regulation of inflammation induced by high glucose through the PKB/AKT signaling pathway. Also involved in erythrocyte differentiation through activation of the ERK1/ERK2 signaling pathway. This is Malignant fibrous histiocytoma-amplified sequence 1 homolog from Mus musculus (Mouse).